The primary structure comprises 556 residues: Formate--tetrahydrofolate ligase (556 aa).

65–72 (TPAGEGKT) lines the ATP pocket.

The protein belongs to the formate--tetrahydrofolate ligase family.

The catalysed reaction is (6S)-5,6,7,8-tetrahydrofolate + formate + ATP = (6R)-10-formyltetrahydrofolate + ADP + phosphate. Its pathway is one-carbon metabolism; tetrahydrofolate interconversion. The chain is Formate--tetrahydrofolate ligase from Peptoclostridium acidaminophilum (Eubacterium acidaminophilum).